The sequence spans 267 residues: Indole-3-glycerol phosphate synthase (267 aa).

Belongs to the TrpC family.

It catalyses the reaction 1-(2-carboxyphenylamino)-1-deoxy-D-ribulose 5-phosphate + H(+) = (1S,2R)-1-C-(indol-3-yl)glycerol 3-phosphate + CO2 + H2O. It functions in the pathway amino-acid biosynthesis; L-tryptophan biosynthesis; L-tryptophan from chorismate: step 4/5. The chain is Indole-3-glycerol phosphate synthase from Polynucleobacter necessarius subsp. necessarius (strain STIR1).